The sequence spans 330 residues: Cyclic AMP receptor-like protein E (330 aa).

Topologically, residues 1 to 10 (MLSLSSYVLN) are extracellular. A helical membrane pass occupies residues 11–31 (LVGSILCLIGCLFIIGHFFWI). The Cytoplasmic portion of the chain corresponds to 32 to 40 (PLLRTSLSR). Residues 41 to 61 (IIIYPTFILLLYDMVSFPSFI) form a helical membrane-spanning segment. At 62-85 (SKTADLYIERSTIICNFQEAIIQY) the chain is on the extracellular side. A helical transmembrane segment spans residues 86-106 (LILSNFIWSVCISVNLLYLCF). Over 107-116 (SPNKNLKKNE) the chain is Cytoplasmic. Residues 117–137 (LLYHLCSWGIPLIVVVITKIP) form a helical membrane-spanning segment. Residues 138–156 (NMISDNGNQCRFKSPNYIK) lie on the Extracellular side of the membrane. A helical transmembrane segment spans residues 157 to 177 (FYLETILFIAFMLFNFIVAFI). Over 178–213 (TIKHIISGNLRESETTTTSVLFVNEKKITTKKIVWR) the chain is Cytoplasmic. The chain crosses the membrane as a helical span at residues 214–234 (LLLYPSILSICYIMTLVLSIY). Topologically, residues 235–274 (QFSTESYGSGGAYANSINNKRNDKNTESGNSNNNNNSYIE) are extracellular. N-linked (GlcNAc...) asparagine glycosylation is present at Asn269. Residues 275–295 (ILLYISKAIFLLQGFFNALVY) traverse the membrane as a helical segment. The Cytoplasmic segment spans residues 296–330 (LRSSKLRDRYKKITIFRKIFWRDEADYQSINDGFN).

This sequence belongs to the G-protein coupled receptor 5 family.

The protein localises to the membrane. Functionally, receptor for cAMP. This is Cyclic AMP receptor-like protein E (crlE) from Dictyostelium discoideum (Social amoeba).